A 203-amino-acid chain; its full sequence is Cryptic neisserial protein 1 (203 aa).

An N-terminal signal peptide occupies residues 1–18 (MRRAILLILTLTVGTSLA).

Belongs to the Cnp family.

It is found in the periplasm. It localises to the cytoplasm. The sequence is that of Cryptic neisserial protein 1 from Neisseria gonorrhoeae (strain ATCC 700825 / FA 1090).